The following is a 158-amino-acid chain: 6,7-dimethyl-8-ribityllumazine synthase (158 aa).

5-amino-6-(D-ribitylamino)uracil is bound by residues phenylalanine 23, 57 to 59 (AFE), and 81 to 83 (TVI). A (2S)-2-hydroxy-3-oxobutyl phosphate-binding site is contributed by 86 to 87 (GT). Catalysis depends on histidine 89, which acts as the Proton donor. Position 114 (phenylalanine 114) interacts with 5-amino-6-(D-ribitylamino)uracil. Residue arginine 128 coordinates (2S)-2-hydroxy-3-oxobutyl phosphate.

It belongs to the DMRL synthase family.

It carries out the reaction (2S)-2-hydroxy-3-oxobutyl phosphate + 5-amino-6-(D-ribitylamino)uracil = 6,7-dimethyl-8-(1-D-ribityl)lumazine + phosphate + 2 H2O + H(+). It functions in the pathway cofactor biosynthesis; riboflavin biosynthesis; riboflavin from 2-hydroxy-3-oxobutyl phosphate and 5-amino-6-(D-ribitylamino)uracil: step 1/2. In terms of biological role, catalyzes the formation of 6,7-dimethyl-8-ribityllumazine by condensation of 5-amino-6-(D-ribitylamino)uracil with 3,4-dihydroxy-2-butanone 4-phosphate. This is the penultimate step in the biosynthesis of riboflavin. The sequence is that of 6,7-dimethyl-8-ribityllumazine synthase from Desulforudis audaxviator (strain MP104C).